A 433-amino-acid chain; its full sequence is DNA methyltransferase 1-associated protein 1 (433 aa).

A required for nuclear localization region spans residues 1-204 (MSADVRDILD…EVVALLAKAK (204 aa)). Residues 148–197 (NNWSKVQTDHLFDLARRFDLRFIVMADRWNRQQHGTKTVEELKERYYEVV) form the Myb-like domain. Residues 186-281 (VEELKERYYE…ADQQNEHASN (96 aa)) are a coiled coil. Basic and acidic residues predominate over residues 252–264 (EARKKERERKTQD). Positions 252-305 (EARKKERERKTQDLQKLISQADQQNEHASNTPSTRKYEKKLHKKKVHQQPRPSR) are disordered. Positions 268-285 (LISQADQQNEHASNTPST) are enriched in polar residues. Residues 288-299 (YEKKLHKKKVHQ) are compositionally biased toward basic residues.

Interacts with Rel. Interacts with akirin and Bap55.

Its subcellular location is the nucleus. It is found in the cytoplasm. Involved in transcription repression and activation. Required for larvae and pupal development, and for normal innate immune responses. Involved in modulating the activation of the immune deficiency pathway (Imd), acting either downstream of, or at the level of, the NF-kappa-B factor Rel. Possibly functions with akirin to regulate Rel, and its interaction with the Brahma complex protein Bap55 suggests that it may regulate the IMD pathway at the level of chromatin remodeling. This is DNA methyltransferase 1-associated protein 1 from Drosophila melanogaster (Fruit fly).